Here is a 425-residue protein sequence, read N- to C-terminus: Elongation factor 1-alpha (425 aa).

The tr-type G domain maps to 5 to 221 (KPHINLAVIG…DELEVPDKPT (217 aa)). The segment at 14–21 (GHIDHGKS) is G1. 14–21 (GHIDHGKS) provides a ligand contact to GTP. S21 contacts Mg(2+). The G2 stretch occupies residues 70 to 74 (GITID). Positions 91 to 94 (DCPG) are G3. Residues 91 to 95 (DCPGH) and 146 to 149 (NKMD) each bind GTP. The interval 146-149 (NKMD) is G4. Residues 185-187 (SAF) form a G5 region.

This sequence belongs to the TRAFAC class translation factor GTPase superfamily. Classic translation factor GTPase family. EF-Tu/EF-1A subfamily.

The protein localises to the cytoplasm. The enzyme catalyses GTP + H2O = GDP + phosphate + H(+). GTP hydrolase that promotes the GTP-dependent binding of aminoacyl-tRNA to the A-site of ribosomes during protein biosynthesis. This chain is Elongation factor 1-alpha, found in Methanospirillum hungatei JF-1 (strain ATCC 27890 / DSM 864 / NBRC 100397 / JF-1).